The following is a 370-amino-acid chain: Phospho-2-dehydro-3-deoxyheptonate aldolase, tyrosine-inhibited (370 aa).

An N-acetylserine modification is found at Ser2.

It belongs to the class-I DAHP synthase family.

The catalysed reaction is D-erythrose 4-phosphate + phosphoenolpyruvate + H2O = 7-phospho-2-dehydro-3-deoxy-D-arabino-heptonate + phosphate. It participates in metabolic intermediate biosynthesis; chorismate biosynthesis; chorismate from D-erythrose 4-phosphate and phosphoenolpyruvate: step 1/7. Its activity is regulated as follows. Inhibited by tyrosine. In terms of biological role, stereospecific condensation of phosphoenolpyruvate (PEP) and D-erythrose-4-phosphate (E4P) giving rise to 3-deoxy-D-arabino-heptulosonate-7-phosphate (DAHP). This Saccharomyces cerevisiae (strain ATCC 204508 / S288c) (Baker's yeast) protein is Phospho-2-dehydro-3-deoxyheptonate aldolase, tyrosine-inhibited (ARO4).